The primary structure comprises 889 residues: Serine/threonine-protein kinase D3 (889 aa).

A phosphoserine mark is found at Ser-27, Ser-37, Ser-41, and Ser-44. The Phorbol-ester/DAG-type 1 zinc-finger motif lies at 154 to 204 (PHALYVHSYKAPTFCDYCGEMLWGLVRQGLKCEGCGLNYHKRCAFKIPNNC). Residues Ser-213 and Ser-216 each carry the phosphoserine modification. The segment at 271–321 (PHTFAVHSYGRPTICQYCKRLLKGLFRQGMQCKDCKFNCHKRCASKVPRDC) adopts a Phorbol-ester/DAG-type 2 zinc-finger fold. Positions 336 to 370 (TDADMPMDIDSSDVNSDGSRGLDDSEEPSPPEDKM) are disordered. Phosphoserine occurs at positions 346, 391, and 395. A PH domain is found at 416–532 (TVVKEGWMVH…WEKAIRQALM (117 aa)). A Phosphotyrosine modification is found at Tyr-426. Ser-442 carries the phosphoserine modification. Tyr-457 is modified (phosphotyrosine). Thr-535 bears the Phosphothreonine mark. At Ser-539 the chain carries Phosphoserine. Residues 575–831 (IFADEVLGSG…VDKSLSHPWL (257 aa)) enclose the Protein kinase domain. Residues 581 to 589 (LGSGQFGIV) and Lys-604 contribute to the ATP site. Asp-698 (proton acceptor) is an active-site residue. Position 730 is a phosphoserine; by PKC (Ser-730). Ser-734 bears the Phosphoserine; by autocatalysis mark. Tyr-741 is modified (phosphotyrosine).

The protein belongs to the protein kinase superfamily. CAMK Ser/Thr protein kinase family. PKD subfamily. Mg(2+) is required as a cofactor.

The protein resides in the cytoplasm. Its subcellular location is the membrane. It carries out the reaction L-seryl-[protein] + ATP = O-phospho-L-seryl-[protein] + ADP + H(+). The enzyme catalyses L-threonyl-[protein] + ATP = O-phospho-L-threonyl-[protein] + ADP + H(+). Activated by DAG and phorbol esters. Phorbol-ester/DAG-type domains 1 and 2 bind both DAG and phorbol ester with high affinity and mediate translocation to the cell membrane. Autophosphorylation of Ser-734 and phosphorylation of Ser-730 by PKC relieves auto-inhibition by the PH domain. In terms of biological role, converts transient diacylglycerol (DAG) signals into prolonged physiological effects, downstream of PKC. Involved in resistance to oxidative stress. In Mus musculus (Mouse), this protein is Serine/threonine-protein kinase D3 (Prkd3).